A 63-amino-acid chain; its full sequence is Megourin-1 (63 aa).

Monomer. In terms of processing, contains four disulfide bonds.

The protein localises to the secreted. In terms of biological role, has antimicrobial activity against Gram-positive bacteria and fungi. The sequence is that of Megourin-1 from Megoura viciae (Vetch aphid).